The chain runs to 873 residues: Ectonucleotide pyrophosphatase/phosphodiesterase family member 3 (873 aa).

Topologically, residues 1 to 11 (MESMLTLAMEQ) are cytoplasmic. The helical; Signal-anchor for type II membrane protein transmembrane segment at 12–30 (PVKRNTLKKYKIACIVLLA) threads the bilayer. The Extracellular segment spans residues 31–873 (LLVIVSLGLG…TYLPTFETTI (843 aa)). SMB domains lie at 51-93 (QGSC…VEST) and 94-138 (RIWM…GETS). Disulfide bonds link Cys54–Cys71, Cys58–Cys89, Cys69–Cys82, Cys75–Cys81, Cys98–Cys115, Cys103–Cys133, Cys113–Cys126, Cys119–Cys125, Cys144–Cys190, and Cys152–Cys364. The Cell attachment site signature appears at 78-80 (RGD). Residues 160–544 (PVILFSMDGF…HGSLNHLLKV (385 aa)) are phosphodiesterase. Residue Asp167 coordinates Zn(2+). Residue Lys204 participates in ATP binding. Residue Thr205 participates in Zn(2+) binding. Catalysis depends on Thr205, which acts as the Nucleophile. Residue Asn226 participates in ATP binding. Residue Asn236 is glycosylated (N-linked (GlcNAc...) asparagine). ATP is bound at residue Glu275. Asn279 is a glycosylation site (N-linked (GlcNAc...) asparagine). Position 289 (Tyr289) interacts with ATP. N-linked (GlcNAc...) asparagine glycosylation occurs at Asn290. Zn(2+) contacts are provided by Asp325, His329, Asp372, and His373. Intrachain disulfides connect Cys380–Cys477, Cys428–Cys816, Cys561–Cys621, Cys573–Cys677, Cys575–Cys662, and Cys785–Cys795. Asn425 carries an N-linked (GlcNAc...) asparagine glycan. His482 is a binding site for Zn(2+). Asn532, Asn592, Asn685, and Asn697 each carry an N-linked (GlcNAc...) asparagine glycan. The interval 580–873 (NSIQLEQVNQ…TYLPTFETTI (294 aa)) is nuclease. Residues Asp750, Asn752, Asp754, His756, and Asp758 each coordinate Ca(2+). Asn787 carries an N-linked (GlcNAc...) asparagine glycan.

In terms of assembly, monomer and homodimer. The cofactor is Zn(2+). Post-translationally, N-glycosylated. N-glycosylation is necessary for normal transport to the cell membrane, but is not the apical targeting signal.

The protein localises to the cell membrane. It is found in the apical cell membrane. It localises to the secreted. It catalyses the reaction a ribonucleoside 5'-triphosphate + H2O = a ribonucleoside 5'-phosphate + diphosphate + H(+). The catalysed reaction is ATP + H2O = AMP + diphosphate + H(+). It carries out the reaction CTP + H2O = CMP + diphosphate + H(+). The enzyme catalyses GTP + H2O = GMP + diphosphate + H(+). It catalyses the reaction UTP + H2O = UMP + diphosphate + H(+). The catalysed reaction is UDP-N-acetyl-alpha-D-glucosamine + H2O = N-acetyl-alpha-D-glucosamine 1-phosphate + UMP + 2 H(+). It carries out the reaction P(1),P(3)-bis(5'-adenosyl) triphosphate + H2O = AMP + ADP + 2 H(+). The enzyme catalyses P(1),P(4)-bis(5'-adenosyl) tetraphosphate + H2O = AMP + ATP + 2 H(+). It catalyses the reaction P(1),P(5)-bis(5'-adenosyl) pentaphosphate + H2O = adenosine 5'-tetraphosphate + AMP + 2 H(+). The catalysed reaction is P(1),P(4)-bis(5'-guanosyl) tetraphosphate + H2O = GMP + GTP + 2 H(+). It carries out the reaction Hydrolytically removes 5'-nucleotides successively from the 3'-hydroxy termini of 3'-hydroxy-terminated oligonucleotides.. Hydrolase that metabolizes extracellular nucleotides, including ATP, GTP, UTP and CTP. Limits mast cells and basophils response during inflammation and during the chronic phases of allergic responses by eliminating extracellular ATP, a signaling molecule activating these cells in an autocrine manner. Metabolizes extracellular ATP in the lumen of the small intestine, and thereby prevents ATP-induced apoptosis of intestinal plasmacytoid dendritic cells. Has a broad specificity and can also hydrolyze UDP-GlcNAc into UMP and GlcNAc-1-phosphate and potentially several other intracellular nucleotide sugars, including UDP-GalNAc, CMP-NeuAc, GDP-Fuc, and UDP-GlcA. Thereby, could modulate glycan biosynthesis and protein glycosylation. Can hydrolyze extracellular dinucleoside polyphosphates, including the vasoactive adenosine polyphosphates as well. In addition, displays an alkaline phosphodiesterase activity in vitro. The protein is Ectonucleotide pyrophosphatase/phosphodiesterase family member 3 of Pongo abelii (Sumatran orangutan).